The primary structure comprises 351 residues: Nicotinate-nucleotide--dimethylbenzimidazole phosphoribosyltransferase (351 aa).

The active-site Proton acceptor is Glu-317.

The protein belongs to the CobT family.

The enzyme catalyses 5,6-dimethylbenzimidazole + nicotinate beta-D-ribonucleotide = alpha-ribazole 5'-phosphate + nicotinate + H(+). Its pathway is nucleoside biosynthesis; alpha-ribazole biosynthesis; alpha-ribazole from 5,6-dimethylbenzimidazole: step 1/2. In terms of biological role, catalyzes the synthesis of alpha-ribazole-5'-phosphate from nicotinate mononucleotide (NAMN) and 5,6-dimethylbenzimidazole (DMB). The chain is Nicotinate-nucleotide--dimethylbenzimidazole phosphoribosyltransferase from Bradyrhizobium sp. (strain BTAi1 / ATCC BAA-1182).